A 97-amino-acid polypeptide reads, in one-letter code: DNA/RNA-binding protein Alba 1 (97 aa).

Serine 2 carries the N-acetylserine; by ard1 acetylase modification. The RNA site is built by lysine 16, lysine 17, and tyrosine 22. Lysine 16 bears the N6,N6,N6-trimethyllysine; alternate mark. Lysine 16 carries the post-translational modification N6,N6-dimethyllysine; alternate. Lysine 16 carries the N6-acetyllysine; alternate modification. Lysine 16 bears the N6-methyllysine; alternate mark. Asparagine 31 is modified (deamidated asparagine; partial). The residue at position 32 (glutamine 32) is a Deamidated glutamine; partial. Lysine 40 carries the post-translational modification N6-methyllysine; partial. RNA-binding residues include arginine 42 and arginine 44. Lysine 48 is modified (N6-acetyllysine; partial). Aspartate 51 carries the aspartate methyl ester; partial modification. Asparagine 58 carries the post-translational modification Deamidated asparagine; partial. Lysine 64 carries the N6-acetyllysine; alternate; partial modification. Residue lysine 64 is modified to N6-methyllysine; alternate; partial. An N6-acetyllysine; partial modification is found at lysine 68. Glutamine 75 is subject to N5-methylglutamine; partial. Aspartate methyl ester; partial is present on aspartate 81. N6-methyllysine; partial is present on lysine 97.

The protein belongs to the histone-like Alba family. As to quaternary structure, forms homodimers and higher order oligomers, e.g. homotetramers. Post-translationally, acetylated. Acetylation at Lys-16 by the Pat acetylase decreases DNA-binding affinity. Deacetylation at Lys-16 by the CobB deacetylase increases DNA-binding affinity. Acetylation at Ser-2 is involved in the regulation of the turnover of the protein.

The protein localises to the cytoplasm. Its subcellular location is the chromosome. Binds double-stranded DNA tightly but without sequence specificity. Involved in DNA compaction. Possesses DNA endonuclease activity. Prevents transcription after DNA binding. Binds single-stranded DNA and RNA in vitro. Binds rRNA and mRNA in vivo. May play a role in maintaining the structural and functional stability of RNA, and, perhaps, ribosomes. Binds double-stranded RNA (dsRNA) and exhibits RNA chaperone activity. Required for normal growth. The polypeptide is DNA/RNA-binding protein Alba 1 (Saccharolobus islandicus (strain REY15A) (Sulfolobus islandicus)).